The sequence spans 588 residues: Proline--tRNA ligase (588 aa).

This sequence belongs to the class-II aminoacyl-tRNA synthetase family. ProS type 1 subfamily. Homodimer.

The protein localises to the cytoplasm. The enzyme catalyses tRNA(Pro) + L-proline + ATP = L-prolyl-tRNA(Pro) + AMP + diphosphate. Its function is as follows. Catalyzes the attachment of proline to tRNA(Pro) in a two-step reaction: proline is first activated by ATP to form Pro-AMP and then transferred to the acceptor end of tRNA(Pro). As ProRS can inadvertently accommodate and process non-cognate amino acids such as alanine and cysteine, to avoid such errors it has two additional distinct editing activities against alanine. One activity is designated as 'pretransfer' editing and involves the tRNA(Pro)-independent hydrolysis of activated Ala-AMP. The other activity is designated 'posttransfer' editing and involves deacylation of mischarged Ala-tRNA(Pro). The misacylated Cys-tRNA(Pro) is not edited by ProRS. The chain is Proline--tRNA ligase from Corynebacterium efficiens (strain DSM 44549 / YS-314 / AJ 12310 / JCM 11189 / NBRC 100395).